A 226-amino-acid polypeptide reads, in one-letter code: N-(5'-phosphoribosyl)anthranilate isomerase (226 aa).

The protein belongs to the TrpF family.

The enzyme catalyses N-(5-phospho-beta-D-ribosyl)anthranilate = 1-(2-carboxyphenylamino)-1-deoxy-D-ribulose 5-phosphate. Its pathway is amino-acid biosynthesis; L-tryptophan biosynthesis; L-tryptophan from chorismate: step 3/5. In Candida albicans (strain SC5314 / ATCC MYA-2876) (Yeast), this protein is N-(5'-phosphoribosyl)anthranilate isomerase (TRP1).